A 215-amino-acid chain; its full sequence is CASP-like protein UU3 (215 aa).

Over 1 to 44 the chain is Cytoplasmic; sequence MATAWESEYFDKVTPGERERAVPPMVPQQTPPPVYIQPQVSRNG. The chain crosses the membrane as a helical span at residues 45 to 65; that stretch reads IVASIVLRLLTLIFAVVALAV. Residues 66-93 are Extracellular-facing; it reads LASNTGSFQVSTGSATSVKTIKFTILSA. Residues 94-114 traverse the membrane as a helical segment; that stretch reads FTYLFAVCGVVAVYSLLLIIV. The Cytoplasmic segment spans residues 115–128; the sequence is EMIDLAVRGFTTHT. The chain crosses the membrane as a helical span at residues 129–149; that stretch reads LVAIFVFVLDQTMAYVLISAA. Residues 150–185 are Extracellular-facing; that stretch reads SASANGVKVSRDESNITGYKFDISCSNLGIDDYCTK. A glycan (N-linked (GlcNAc...) asparagine) is linked at asparagine 164. The chain crosses the membrane as a helical span at residues 186 to 206; it reads ASASVAIAFIAFLFMAITAGV. Residues 207–215 are Cytoplasmic-facing; the sequence is SARRLFKLP.

The protein belongs to the Casparian strip membrane proteins (CASP) family. As to quaternary structure, homodimer and heterodimers.

It is found in the cell membrane. In Physcomitrium patens (Spreading-leaved earth moss), this protein is CASP-like protein UU3.